We begin with the raw amino-acid sequence, 138 residues long: MRTLWIMAVLLLGVEGSVIELGKMIFQETGKNPATSYGLYGCNCGPGGRRKPKDATDRCCYVHKCCYKKLTDCDPIKDRYSYSWVNKAIVCGEDNPCLKEMCECDKAVAICFRENLDTYDKKKKINLKLFCKKTSEQC.

A signal peptide spans 1-16 (MRTLWIMAVLLLGVEG). Disulfide bonds link Cys-42/Cys-131, Cys-44/Cys-60, Cys-59/Cys-111, Cys-65/Cys-138, Cys-66/Cys-104, Cys-73/Cys-97, and Cys-91/Cys-102. The important for membrane-damaging activities in eukaryotes and bacteria; heparin-binding stretch occupies residues 121-133 (KKKKINLKLFCKK).

As to expression, expressed by the venom gland.

It is found in the secreted. Functionally, snake venom phospholipase A2 homolog that lacks catalytic activity. It shows myotoxic and weak anticoagulant activities and induces local edema a few hours after injection (5-10 ug) in the hind paw. A model of myotoxic mechanism has been proposed: an apo Lys49-PLA2 is activated by the entrance of a hydrophobic molecule (e.g. fatty acid) at the hydrophobic channel of the protein leading to a reorientation of a monomer. This reorientation causes a transition between 'inactive' to 'active' states, causing alignment of C-terminal and membrane-docking sites (MDoS) side-by-side and putting the membrane-disruption sites (MDiS) in the same plane, exposed to solvent and in a symmetric position for both monomers. The MDoS region stabilizes the toxin on membrane by the interaction of charged residues with phospholipid head groups. Subsequently, the MDiS region destabilizes the membrane with penetration of hydrophobic residues. This insertion causes a disorganization of the membrane, allowing an uncontrolled influx of ions (i.e. calcium and sodium), and eventually triggering irreversible intracellular alterations and cell death. This chain is Basic phospholipase A2 homolog Ts-K49a, found in Trimeresurus stejnegeri (Chinese green tree viper).